The following is a 209-amino-acid chain: Thymidine kinase (209 aa).

ATP is bound by residues 16–23 (GPMFAGKT) and 90–93 (DESQ). Glutamate 91 serves as the catalytic Proton acceptor.

The protein belongs to the thymidine kinase family. In terms of assembly, homotetramer.

Its subcellular location is the cytoplasm. The catalysed reaction is thymidine + ATP = dTMP + ADP + H(+). In Aster yellows witches'-broom phytoplasma (strain AYWB), this protein is Thymidine kinase.